The following is a 479-amino-acid chain: Ribosomal RNA small subunit methyltransferase F (479 aa).

S-adenosyl-L-methionine is bound by residues 125–131 (AAAPGSK), E149, D176, and D194. Catalysis depends on C247, which acts as the Nucleophile.

Belongs to the class I-like SAM-binding methyltransferase superfamily. RsmB/NOP family.

The protein localises to the cytoplasm. It catalyses the reaction cytidine(1407) in 16S rRNA + S-adenosyl-L-methionine = 5-methylcytidine(1407) in 16S rRNA + S-adenosyl-L-homocysteine + H(+). In terms of biological role, specifically methylates the cytosine at position 1407 (m5C1407) of 16S rRNA. This is Ribosomal RNA small subunit methyltransferase F from Escherichia coli (strain ATCC 8739 / DSM 1576 / NBRC 3972 / NCIMB 8545 / WDCM 00012 / Crooks).